The sequence spans 178 residues: 2-C-methyl-D-erythritol 2,4-cyclodiphosphate synthase (178 aa).

Aspartate 24, histidine 26, and histidine 61 together coordinate a divalent metal cation. 24–26 (DSH) contacts 4-CDP-2-C-methyl-D-erythritol 2-phosphate. 4-CDP-2-C-methyl-D-erythritol 2-phosphate is bound at residue 150-153 (TSGE).

The protein belongs to the IspF family. As to quaternary structure, homotrimer. A divalent metal cation is required as a cofactor.

The enzyme catalyses 4-CDP-2-C-methyl-D-erythritol 2-phosphate = 2-C-methyl-D-erythritol 2,4-cyclic diphosphate + CMP. The protein operates within isoprenoid biosynthesis; isopentenyl diphosphate biosynthesis via DXP pathway; isopentenyl diphosphate from 1-deoxy-D-xylulose 5-phosphate: step 4/6. Functionally, involved in the biosynthesis of isopentenyl diphosphate (IPP) and dimethylallyl diphosphate (DMAPP), two major building blocks of isoprenoid compounds. Catalyzes the conversion of 4-diphosphocytidyl-2-C-methyl-D-erythritol 2-phosphate (CDP-ME2P) to 2-C-methyl-D-erythritol 2,4-cyclodiphosphate (ME-CPP) with a corresponding release of cytidine 5-monophosphate (CMP). The sequence is that of 2-C-methyl-D-erythritol 2,4-cyclodiphosphate synthase from Chlamydia trachomatis serovar L2 (strain ATCC VR-902B / DSM 19102 / 434/Bu).